The following is a 476-amino-acid chain: Glycogen synthase (476 aa).

Residue Lys15 coordinates ADP-alpha-D-glucose.

This sequence belongs to the glycosyltransferase 1 family. Bacterial/plant glycogen synthase subfamily.

The enzyme catalyses [(1-&gt;4)-alpha-D-glucosyl](n) + ADP-alpha-D-glucose = [(1-&gt;4)-alpha-D-glucosyl](n+1) + ADP + H(+). The protein operates within glycan biosynthesis; glycogen biosynthesis. Its function is as follows. Synthesizes alpha-1,4-glucan chains using ADP-glucose. The protein is Glycogen synthase of Streptococcus equi subsp. zooepidemicus (strain H70).